The chain runs to 450 residues: tRNA-2-methylthio-N(6)-dimethylallyladenosine synthase (450 aa).

In terms of domain architecture, MTTase N-terminal spans 7–127 (KKVFIKTYGC…LPDVLARVRG (121 aa)). Positions 16, 52, 90, 168, 172, and 175 each coordinate [4Fe-4S] cluster. The 235-residue stretch at 154–388 (IKRGVTAFLT…LLLKQQQGFG (235 aa)) folds into the Radical SAM core domain. The region spanning 389 to 450 (SSLVGSTIDT…GYNSLFAELA (62 aa)) is the TRAM domain.

It belongs to the methylthiotransferase family. MiaB subfamily. Monomer. [4Fe-4S] cluster is required as a cofactor.

It localises to the cytoplasm. It carries out the reaction N(6)-dimethylallyladenosine(37) in tRNA + (sulfur carrier)-SH + AH2 + 2 S-adenosyl-L-methionine = 2-methylsulfanyl-N(6)-dimethylallyladenosine(37) in tRNA + (sulfur carrier)-H + 5'-deoxyadenosine + L-methionine + A + S-adenosyl-L-homocysteine + 2 H(+). In terms of biological role, catalyzes the methylthiolation of N6-(dimethylallyl)adenosine (i(6)A), leading to the formation of 2-methylthio-N6-(dimethylallyl)adenosine (ms(2)i(6)A) at position 37 in tRNAs that read codons beginning with uridine. This Mesorhizobium japonicum (strain LMG 29417 / CECT 9101 / MAFF 303099) (Mesorhizobium loti (strain MAFF 303099)) protein is tRNA-2-methylthio-N(6)-dimethylallyladenosine synthase.